The sequence spans 366 residues: tRNA pseudouridine synthase B (366 aa).

The active-site Nucleophile is the Asp-44.

Belongs to the pseudouridine synthase TruB family. Type 1 subfamily.

The catalysed reaction is uridine(55) in tRNA = pseudouridine(55) in tRNA. Its function is as follows. Responsible for synthesis of pseudouridine from uracil-55 in the psi GC loop of transfer RNAs. This is tRNA pseudouridine synthase B from Treponema pallidum (strain Nichols).